We begin with the raw amino-acid sequence, 262 residues long: Adenosylcobinamide-GDP ribazoletransferase (262 aa).

6 helical membrane passes run 43-63 (YFGL…WLTQ), 66-86 (LPAG…TGGF), 120-140 (GALA…ELAL), 146-166 (AGSA…SLIF), 191-211 (LFIL…IAAL), and 242-262 (AAQQ…GSIL).

This sequence belongs to the CobS family. Requires Mg(2+) as cofactor.

Its subcellular location is the cell inner membrane. It catalyses the reaction alpha-ribazole + adenosylcob(III)inamide-GDP = adenosylcob(III)alamin + GMP + H(+). The catalysed reaction is alpha-ribazole 5'-phosphate + adenosylcob(III)inamide-GDP = adenosylcob(III)alamin 5'-phosphate + GMP + H(+). It functions in the pathway cofactor biosynthesis; adenosylcobalamin biosynthesis; adenosylcobalamin from cob(II)yrinate a,c-diamide: step 7/7. Its function is as follows. Joins adenosylcobinamide-GDP and alpha-ribazole to generate adenosylcobalamin (Ado-cobalamin). Also synthesizes adenosylcobalamin 5'-phosphate from adenosylcobinamide-GDP and alpha-ribazole 5'-phosphate. The chain is Adenosylcobinamide-GDP ribazoletransferase from Shewanella sp. (strain ANA-3).